A 240-amino-acid polypeptide reads, in one-letter code: UDP-2,3-diacylglucosamine hydrolase (240 aa).

Asp8, His10, Asp41, Asn79, and His114 together coordinate Mn(2+). 79–80 (NR) contacts substrate. 5 residues coordinate substrate: Asp122, Ser160, Asn164, Lys167, and His195. The Mn(2+) site is built by His195 and His197.

The protein belongs to the LpxH family. The cofactor is Mn(2+).

The protein localises to the cell inner membrane. It carries out the reaction UDP-2-N,3-O-bis[(3R)-3-hydroxytetradecanoyl]-alpha-D-glucosamine + H2O = 2-N,3-O-bis[(3R)-3-hydroxytetradecanoyl]-alpha-D-glucosaminyl 1-phosphate + UMP + 2 H(+). It participates in glycolipid biosynthesis; lipid IV(A) biosynthesis; lipid IV(A) from (3R)-3-hydroxytetradecanoyl-[acyl-carrier-protein] and UDP-N-acetyl-alpha-D-glucosamine: step 4/6. Its function is as follows. Hydrolyzes the pyrophosphate bond of UDP-2,3-diacylglucosamine to yield 2,3-diacylglucosamine 1-phosphate (lipid X) and UMP by catalyzing the attack of water at the alpha-P atom. Involved in the biosynthesis of lipid A, a phosphorylated glycolipid that anchors the lipopolysaccharide to the outer membrane of the cell. The sequence is that of UDP-2,3-diacylglucosamine hydrolase from Shigella boydii serotype 18 (strain CDC 3083-94 / BS512).